The primary structure comprises 476 residues: Bifunctional protein HldE (476 aa).

The interval Met1–Ala318 is ribokinase. An ATP-binding site is contributed by Asn195–Glu198. Asp264 is a catalytic residue. Residues Met344–Gly476 are cytidylyltransferase.

This sequence in the N-terminal section; belongs to the carbohydrate kinase PfkB family. It in the C-terminal section; belongs to the cytidylyltransferase family. Homodimer.

The catalysed reaction is D-glycero-beta-D-manno-heptose 7-phosphate + ATP = D-glycero-beta-D-manno-heptose 1,7-bisphosphate + ADP + H(+). The enzyme catalyses D-glycero-beta-D-manno-heptose 1-phosphate + ATP + H(+) = ADP-D-glycero-beta-D-manno-heptose + diphosphate. It functions in the pathway nucleotide-sugar biosynthesis; ADP-L-glycero-beta-D-manno-heptose biosynthesis; ADP-L-glycero-beta-D-manno-heptose from D-glycero-beta-D-manno-heptose 7-phosphate: step 1/4. Its pathway is nucleotide-sugar biosynthesis; ADP-L-glycero-beta-D-manno-heptose biosynthesis; ADP-L-glycero-beta-D-manno-heptose from D-glycero-beta-D-manno-heptose 7-phosphate: step 3/4. In terms of biological role, catalyzes the phosphorylation of D-glycero-D-manno-heptose 7-phosphate at the C-1 position to selectively form D-glycero-beta-D-manno-heptose-1,7-bisphosphate. Catalyzes the ADP transfer from ATP to D-glycero-beta-D-manno-heptose 1-phosphate, yielding ADP-D-glycero-beta-D-manno-heptose. In Chromohalobacter salexigens (strain ATCC BAA-138 / DSM 3043 / CIP 106854 / NCIMB 13768 / 1H11), this protein is Bifunctional protein HldE.